Reading from the N-terminus, the 439-residue chain is Na(+)/H(+) antiporter NhaA (439 aa).

11 helical membrane-spanning segments follow: residues 12–32 (SMNI…AIIA), 67–87 (MIEF…GLEI), 103–123 (ALPF…YMSI), 133–153 (GLAI…SLLG), 162–182 (IFLT…IALF), 186–206 (HVSY…YFIG), 214–234 (IFFL…GIHS), 314–334 (ILPL…GELV), 341–361 (VAAG…WLAI), 379–399 (GIAL…NLSF), and 412–432 (FGVL…LRIV).

This sequence belongs to the NhaA Na(+)/H(+) (TC 2.A.33) antiporter family.

The protein localises to the cell inner membrane. The enzyme catalyses Na(+)(in) + 2 H(+)(out) = Na(+)(out) + 2 H(+)(in). Its function is as follows. Na(+)/H(+) antiporter that extrudes sodium in exchange for external protons. In Bacteroides thetaiotaomicron (strain ATCC 29148 / DSM 2079 / JCM 5827 / CCUG 10774 / NCTC 10582 / VPI-5482 / E50), this protein is Na(+)/H(+) antiporter NhaA.